Here is a 426-residue protein sequence, read N- to C-terminus: Adenylosuccinate synthetase (426 aa).

Residues 12 to 18 (GDEGKGK) and 40 to 42 (GHT) each bind GTP. Aspartate 13 serves as the catalytic Proton acceptor. Residues aspartate 13 and glycine 40 each coordinate Mg(2+). Residues 13 to 16 (DEGK), 38 to 41 (NAGH), threonine 130, arginine 144, glutamine 224, threonine 239, and arginine 303 contribute to the IMP site. Histidine 41 functions as the Proton donor in the catalytic mechanism. Position 299–305 (299–305 (TVTNRVR)) interacts with substrate. Residues arginine 305, 331–333 (KLD), and 413–415 (STG) each bind GTP.

This sequence belongs to the adenylosuccinate synthetase family. Homodimer. Requires Mg(2+) as cofactor.

It is found in the cytoplasm. It carries out the reaction IMP + L-aspartate + GTP = N(6)-(1,2-dicarboxyethyl)-AMP + GDP + phosphate + 2 H(+). The protein operates within purine metabolism; AMP biosynthesis via de novo pathway; AMP from IMP: step 1/2. Plays an important role in the de novo pathway of purine nucleotide biosynthesis. Catalyzes the first committed step in the biosynthesis of AMP from IMP. The sequence is that of Adenylosuccinate synthetase from Anaplasma marginale (strain St. Maries).